Consider the following 186-residue polypeptide: MKAVHLYEEIEIPQGINVNIEGMKIKVKGPKGEIEKDFSHISGIEIRKEDNKIVVETTFADRRKKAQFYSIIAHIENMFTGVTKGYRYYLKIIYTHFPVTVKVSGNEVQIQNLIGEKNIRRAKIMTGVKVNVKGEDIIVEGQDIEKVGQTAANIELASKITGYDRRVFADGIYIYKKEVIGSEQTD.

Belongs to the universal ribosomal protein uL6 family. As to quaternary structure, part of the 50S ribosomal subunit.

Functionally, this protein binds to the 23S rRNA, and is important in its secondary structure. It is located near the subunit interface in the base of the L7/L12 stalk, and near the tRNA binding site of the peptidyltransferase center. This chain is Large ribosomal subunit protein uL6, found in Sulfurisphaera tokodaii (strain DSM 16993 / JCM 10545 / NBRC 100140 / 7) (Sulfolobus tokodaii).